The chain runs to 439 residues: MSDPKKLFIKTYGCQMNVYDSERMAEALGGQGYVETQSAEDADMILLNTCHIREKAAEKVYSELGRFKGLKAAKPDLKIGVAGCVAQAEGEEIMRRQPLVDLVVGPQSYHRLPELEAKTRAGEKALDTDFPEEDKFEKLKGRPKAKRGPTAFLTVQEGCDKFCAFCVVPYTRGAEVSRPADRILREANELVERGVREITLLGQNVNAYHGAGPNGDMTLAGLIWELDKIDGLERIRFTTSHPNDMADDLIEAHGTCAKLMPYLHLPVQAGSDKILKRMNRSHTAESYLRLIERIRAARPDIVMSGDFIVGFPEETEADFQDTLDLVEQVRYGYAYSFKYSTRPGTPAAERAQVDPAEADDRLQRLQAVITRHQREIQDGMVGREVSVLFEKPGRQPGQMVGKSEYLHAVHVQDPGLEAGQIARVRIVASGANSLAGELA.

The MTTase N-terminal domain maps to 5–121; sequence KKLFIKTYGC…LPELEAKTRA (117 aa). [4Fe-4S] cluster-binding residues include Cys14, Cys50, Cys84, Cys159, Cys163, and Cys166. Residues 145–378 form the Radical SAM core domain; sequence AKRGPTAFLT…ITRHQREIQD (234 aa). In terms of domain architecture, TRAM spans 378–439; the sequence is DGMVGREVSV…GANSLAGELA (62 aa).

Belongs to the methylthiotransferase family. MiaB subfamily. In terms of assembly, monomer. It depends on [4Fe-4S] cluster as a cofactor.

Its subcellular location is the cytoplasm. It carries out the reaction N(6)-dimethylallyladenosine(37) in tRNA + (sulfur carrier)-SH + AH2 + 2 S-adenosyl-L-methionine = 2-methylsulfanyl-N(6)-dimethylallyladenosine(37) in tRNA + (sulfur carrier)-H + 5'-deoxyadenosine + L-methionine + A + S-adenosyl-L-homocysteine + 2 H(+). In terms of biological role, catalyzes the methylthiolation of N6-(dimethylallyl)adenosine (i(6)A), leading to the formation of 2-methylthio-N6-(dimethylallyl)adenosine (ms(2)i(6)A) at position 37 in tRNAs that read codons beginning with uridine. The protein is tRNA-2-methylthio-N(6)-dimethylallyladenosine synthase of Ruegeria pomeroyi (strain ATCC 700808 / DSM 15171 / DSS-3) (Silicibacter pomeroyi).